The sequence spans 74 residues: Cytochrome c oxidase assembly factor 5 (74 aa).

The 39-residue stretch at 27-65 (ESDCVVQEGKSPRQCLKEGYCNSLKYAFFECKRSVLDNR) folds into the CHCH domain. Residues 30–41 (CVVQEGKSPRQC) carry the Cx10C motif motif. 2 disulfides stabilise this stretch: Cys30/Cys57 and Cys41/Cys47. Ser37 carries the phosphoserine modification. Positions 47 to 57 (CNSLKYAFFEC) match the Cx9C motif motif.

The protein belongs to the PET191 family.

Its function is as follows. Involved in an early step of the mitochondrial complex IV assembly process. In Pongo abelii (Sumatran orangutan), this protein is Cytochrome c oxidase assembly factor 5 (Coa5).